We begin with the raw amino-acid sequence, 130 residues long: Protein ApaG (130 aa).

The 125-residue stretch at 3–127 folds into the ApaG domain; that stretch reads EHESCGVRIS…FSLDRPSDRL (125 aa).

The protein is Protein ApaG of Maricaulis maris (strain MCS10) (Caulobacter maris).